Consider the following 117-residue polypeptide: UPF0102 protein RSKD131_0118 (117 aa).

The protein belongs to the UPF0102 family.

In Cereibacter sphaeroides (strain KD131 / KCTC 12085) (Rhodobacter sphaeroides), this protein is UPF0102 protein RSKD131_0118.